The sequence spans 221 residues: NEDD8 ultimate buster 1 (221 aa).

3 UBA domains span residues 1-19 (LGLR…HIAN), 30-76 (EERE…LLHN), and 95-135 (SPSQ…LVHN). The tract at residues 136-193 (GGRLPPDLQLSAEDSSSTPSTSPSDSAGTSSASTDEDMETEAVNEILEDIPEHEEDYL) is disordered. Low complexity predominate over residues 146-168 (SAEDSSSTPSTSPSDSAGTSSAS). Positions 169-193 (TDEDMETEAVNEILEDIPEHEEDYL) are enriched in acidic residues.

In terms of assembly, directly interacts with NEDD8 and PSMD4/S5a, a member of the regulatory subunit of the 26S proteasome. Interacts with AIPL1.

The protein resides in the nucleus. In terms of biological role, specific down-regulator of the NEDD8 conjugation system. Recruits NEDD8 and its conjugates to the proteasome for degradation. In Bos taurus (Bovine), this protein is NEDD8 ultimate buster 1 (NUB1).